A 599-amino-acid polypeptide reads, in one-letter code: 1-deoxy-D-xylulose-5-phosphate synthase (599 aa).

Thiamine diphosphate-binding positions include His63 and 104–106; that span reads GHS. Mg(2+) is bound at residue Asp135. Residues 136-137, Asn164, Tyr271, and Glu352 each bind thiamine diphosphate; that span reads GA. Asn164 lines the Mg(2+) pocket.

This sequence belongs to the transketolase family. DXPS subfamily. In terms of assembly, homodimer. The cofactor is Mg(2+). Thiamine diphosphate is required as a cofactor.

It catalyses the reaction D-glyceraldehyde 3-phosphate + pyruvate + H(+) = 1-deoxy-D-xylulose 5-phosphate + CO2. It participates in metabolic intermediate biosynthesis; 1-deoxy-D-xylulose 5-phosphate biosynthesis; 1-deoxy-D-xylulose 5-phosphate from D-glyceraldehyde 3-phosphate and pyruvate: step 1/1. Catalyzes the acyloin condensation reaction between C atoms 2 and 3 of pyruvate and glyceraldehyde 3-phosphate to yield 1-deoxy-D-xylulose-5-phosphate (DXP). The polypeptide is 1-deoxy-D-xylulose-5-phosphate synthase (Nitratiruptor sp. (strain SB155-2)).